The primary structure comprises 166 residues: Endoribonuclease YbeY (166 aa).

Positions 132, 136, and 142 each coordinate Zn(2+).

It belongs to the endoribonuclease YbeY family. Zn(2+) is required as a cofactor.

It localises to the cytoplasm. In terms of biological role, single strand-specific metallo-endoribonuclease involved in late-stage 70S ribosome quality control and in maturation of the 3' terminus of the 16S rRNA. This is Endoribonuclease YbeY from Clostridium botulinum (strain 657 / Type Ba4).